Consider the following 436-residue polypeptide: MGDKNDDDKNIEIWKIKKLIKSLEAARGNGTSMISLIMPPRDQVSRVTKMLGDEYGTASNIKSRVNRQSVLGAITSAQQRLKLYNRVPPNGLVLYTGTIVNEDGKEKKVTIDFEPFRPINASLYLCDNKFHTEALNELLESDDKFGFIVMDGNGTLFGTLSGNTREVLHKFSVDLPKKHGRGGQSALRFARLRMEKRHNYVRKTAELATQYYINPATSQPNVSGLILAGSADFKTELSQSDMFDPRLAAKILNVVDVSYGGENGFNQAIELSAEILANVKFIQEKRLIGKYFEEISQDTGKYVFGVEDTLNALESGAIETLIVWENLDINRYVMKNSATGETVIKHLNKEQEANTENFKVADSDLALDVEEKLSLLEWLANEYRRFGCALEFVTNKSQEGSQFCRGFGGIGGILRYQLDMTAFDSEDGEALDDDSE.

This sequence belongs to the eukaryotic release factor 1 family. Heterodimer of two subunits, one of which binds GTP.

The protein localises to the cytoplasm. Its function is as follows. Directs the termination of nascent peptide synthesis (translation) in response to the termination codons UAA, UAG and UGA. Modulates plant growth and development. This chain is Eukaryotic peptide chain release factor subunit 1-1 (ERF1-1), found in Arabidopsis thaliana (Mouse-ear cress).